Reading from the N-terminus, the 190-residue chain is Peptide deformylase (190 aa).

Fe cation-binding residues include Cys-106 and His-148. Residue Glu-149 is part of the active site. His-152 contacts Fe cation.

The protein belongs to the polypeptide deformylase family. The cofactor is Fe(2+).

It catalyses the reaction N-terminal N-formyl-L-methionyl-[peptide] + H2O = N-terminal L-methionyl-[peptide] + formate. Removes the formyl group from the N-terminal Met of newly synthesized proteins. Requires at least a dipeptide for an efficient rate of reaction. N-terminal L-methionine is a prerequisite for activity but the enzyme has broad specificity at other positions. This Methylacidiphilum infernorum (isolate V4) (Methylokorus infernorum (strain V4)) protein is Peptide deformylase.